Reading from the N-terminus, the 625-residue chain is Probable potassium transport system protein Kup 2 (625 aa).

Transmembrane regions (helical) follow at residues 15–35 (LSFA…LYAF), 52–72 (ILSL…LVIV), 98–118 (GGWL…DGML), 134–154 (LSPN…FFLF), 164–184 (IGVY…ILGF), 212–232 (LALF…ALFA), 246–266 (WFAV…ALVL), 284–304 (FLPV…QAII), 336–356 (VYLP…VVIF), 365–385 (AYGI…GIIA), 394–414 (FKIL…AGNI), and 417–437 (LLTG…VMYT).

Belongs to the HAK/KUP transporter (TC 2.A.72) family.

It is found in the cell inner membrane. The enzyme catalyses K(+)(in) + H(+)(in) = K(+)(out) + H(+)(out). Transport of potassium into the cell. Likely operates as a K(+):H(+) symporter. This Legionella pneumophila (strain Corby) protein is Probable potassium transport system protein Kup 2.